The sequence spans 761 residues: MAKRTFSSLEAFLIFLLVMMTAITVALLTLLFVTSGTIENHKDSGNHWVSTTQGPTTTQSSPTTQTPTTQTPDLPPSQNFSGYYIGVGRADCTGQVSDINLMGYGKNGQNAQGLLTRLFSRAFILADPDGSNRMAFVSVELCMISQRLRLEVLKRLQSKYGSLYRRDNVILSATHTHSGPAGFFQYTLYILASEGFSNRTFQYIVSGIVKSIDIAHTNLKPGKVLINKGNVANVQINRSPSSYLQNPPSERARYSSDTDKEMVVLKLVDLNGEDLGLISWFAVHPVSMNNSNHLVNSDNMGYAAYLFEQEKNRGYLPGQGPFVAGFASSNLGDVSPNILGPHCVNTGESCDNDKSTCPSGGPSMCMASGPGQDMFESTHIIGRVIYQKAKELHASASQEVTGPVLTAHQWVNMTDVSVQLNATHTVKTCKAALGYSFAAGTIDGVSGLNITQGTTEGNLFWDTLRDQLLGKPSEEIIECQKPKPILIHTGELTKPHPWQPDIVDIQIVTLGSLAIAAIPGEFTTMSGRRLREAVKKEFALYGMKDMTVVIAGLSNVYTHYITTYEEYQAQRYEAASTIYGPHTLSAYIQLFRALAKAIATDTVANMSSGPEPPFFKNLIGSLIPNIADRAPIGKQFGDVLQPAKPEYRVGEVVEVVFVGANPKNSAENQTHQTFLTVEKYEDSVANWQIMHNDASWETRFYWHKGVLGLSNATIHWHIPDTALPGVYRIRYFGHNRKQELLKPAVILAFEGISSPFEIVTT.

Over Met-1 to Ala-11 the chain is Cytoplasmic. Residues Phe-12–Phe-32 traverse the membrane as a helical; Signal-anchor for type II membrane protein segment. The Lumenal portion of the chain corresponds to Val-33–Thr-761. Residues Asp-43–Pro-76 form a disordered region. Residues Ser-50–Pro-76 show a composition bias toward low complexity. Residues Thr-51, Thr-52, Thr-56, Thr-57, and Thr-58 are each glycosylated (O-linked (GalNAc...) threonine). O-linked (GalNAc...) serine glycosylation is found at Ser-60 and Ser-61. Thr-63, Thr-64, Thr-66, Thr-68, Thr-69, and Thr-71 each carry an O-linked (GalNAc...) threonine glycan. Leu-115 serves as a coordination point for Ca(2+). Position 175 (His-175) interacts with Zn(2+). Asn-198 carries N-linked (GlcNAc...) asparagine glycosylation. His-284 contacts Zn(2+). The active-site Nucleophile is Ser-335. 2 disulfide bridges follow: Cys-343/Cys-357 and Cys-350/Cys-365. Asn-412 and Asn-449 each carry an N-linked (GlcNAc...) asparagine glycan. Cys-429 and Cys-479 are disulfide-bonded. Zn(2+) is bound by residues Glu-521 and Tyr-560. Asp-693, Ser-695, and Thr-698 together coordinate Ca(2+). The required for correct folding and localization stretch occupies residues Gly-751–Thr-761.

The protein belongs to the neutral ceramidase family. The cofactor is Zn(2+). In terms of processing, proteolytic cleavage of the N-terminus removes the signal-anchor and produces a soluble form of the protein. Post-translationally, N-glycosylated. Required for enzyme activity. O-glycosylated. Required to retain it as a type II membrane protein at the cell surface. In terms of processing, phosphorylated. May prevent ubiquitination and subsequent degradation. Post-translationally, ubiquitinated, leading to its degradation by the proteasome. Ubiquitination is triggered by nitric oxide. In terms of tissue distribution, highly expressed in brain, kidney and heart. Expressed at lower level in other tissues such as liver. Expressed in intestine, kidney and liver (at protein level). Localizes in the epithelia of the jejunum and ileum.

The protein localises to the cell membrane. It localises to the membrane raft. Its subcellular location is the membrane. It is found in the caveola. The protein resides in the golgi apparatus membrane. The protein localises to the mitochondrion. It localises to the secreted. Its subcellular location is the extracellular exosome. The enzyme catalyses an N-acylsphing-4-enine + H2O = sphing-4-enine + a fatty acid. The catalysed reaction is N-hexadecanoylsphing-4-enine + H2O = sphing-4-enine + hexadecanoate. It carries out the reaction N-tetradecanoylsphing-4-enine + H2O = tetradecanoate + sphing-4-enine. It catalyses the reaction N-(9Z-octadecenoyl)-sphing-4-enine + H2O = sphing-4-enine + (9Z)-octadecenoate. The enzyme catalyses N-(15Z-tetracosenoyl)-sphing-4-enine + H2O = (15Z)-tetracosenoate + sphing-4-enine. The catalysed reaction is N-octanoylsphing-4-enine + H2O = octanoate + sphing-4-enine. It carries out the reaction N-dodecanoylsphing-4-enine + H2O = dodecanoate + sphing-4-enine. It catalyses the reaction N-(hexanoyl)sphing-4-enine + H2O = hexanoate + sphing-4-enine. The enzyme catalyses N-octadecanoylsphing-4-enine + H2O = sphing-4-enine + octadecanoate. The catalysed reaction is sphinganine + hexadecanoate = N-hexadecanoylsphinganine + H2O. It carries out the reaction N-(octadecanoyl)-sphinganine + H2O = sphinganine + octadecanoate. It functions in the pathway lipid metabolism; sphingolipid metabolism. Its activity is regulated as follows. The reverse reaction is inhibited by Zn(2+) and Cu(2+). Inhibited by cardiolipin and phosphatidic acid. In terms of biological role, plasma membrane ceramidase that hydrolyzes sphingolipid ceramides into sphingosine and free fatty acids at neutral pH. Ceramides, sphingosine, and its phosphorylated form sphingosine-1-phosphate are bioactive lipids that mediate cellular signaling pathways regulating several biological processes including cell proliferation, apoptosis and differentiation. Also catalyzes the reverse reaction allowing the synthesis of ceramides from fatty acids and sphingosine. Together with sphingomyelinase, participates in the production of sphingosine and sphingosine-1-phosphate from the degradation of sphingomyelin, a sphingolipid enriched in the plasma membrane of cells. Also participates in the hydrolysis of ceramides from the extracellular milieu allowing the production of sphingosine-1-phosphate inside and outside cells. This is the case for instance with the digestion of dietary sphingolipids in the intestinal tract. The protein is Neutral ceramidase (Asah2) of Rattus norvegicus (Rat).